The following is a 177-amino-acid chain: Peptide deformylase (177 aa).

Cysteine 98 and histidine 140 together coordinate Fe cation. Residue glutamate 141 is part of the active site. Residue histidine 144 coordinates Fe cation.

This sequence belongs to the polypeptide deformylase family. The cofactor is Fe(2+).

The catalysed reaction is N-terminal N-formyl-L-methionyl-[peptide] + H2O = N-terminal L-methionyl-[peptide] + formate. Removes the formyl group from the N-terminal Met of newly synthesized proteins. Requires at least a dipeptide for an efficient rate of reaction. N-terminal L-methionine is a prerequisite for activity but the enzyme has broad specificity at other positions. This chain is Peptide deformylase, found in Zymomonas mobilis subsp. mobilis (strain ATCC 31821 / ZM4 / CP4).